A 299-amino-acid chain; its full sequence is Sulfate adenylyltransferase subunit 2 (299 aa).

Belongs to the PAPS reductase family. CysD subfamily. As to quaternary structure, sulfate-activating enzymes, NodP and NodQ, may be physically associated.

It carries out the reaction sulfate + ATP + H(+) = adenosine 5'-phosphosulfate + diphosphate. Functionally, proposed to provide activated sulfate for transfer to nod factor. The protein is Sulfate adenylyltransferase subunit 2 (nodP) of Rhizobium tropici.